The primary structure comprises 705 residues: Probable iron-sulfur-binding oxidoreductase FadF (705 aa).

The next 6 helical transmembrane spans lie at 4–24 (FLIANALLFLIVTAYAVYLFV), 71–91 (IIHVMFFYGFILVQFGAIDFI), 109–129 (AFTFFQEIVTFLILIAVGWAF), 146–166 (AGLVLIFIGGLMLTVLLGNGM), 173–193 (HGLSWSEPIASGIAFMLSGVG), and 199–219 (VIFYIAWWIHLLFLLSFLVYV). 4Fe-4S ferredoxin-type domains are found at residues 268 to 298 (QSQLLDLYACVECGRCTNMCPATGTGKMLSP) and 360 to 391 (GDVITEEEIWACTTCRNCEDQCPVMNEHVDKI). The [4Fe-4S] cluster site is built by cysteine 277, cysteine 280, cysteine 283, cysteine 287, cysteine 371, cysteine 374, cysteine 377, and cysteine 381.

[4Fe-4S] cluster is required as a cofactor.

Its subcellular location is the cell membrane. The sequence is that of Probable iron-sulfur-binding oxidoreductase FadF (fadF) from Bacillus subtilis (strain 168).